The sequence spans 216 residues: Peptide methionine sulfoxide reductase MsrA (216 aa).

The active site involves Cys54.

The protein belongs to the MsrA Met sulfoxide reductase family.

The catalysed reaction is L-methionyl-[protein] + [thioredoxin]-disulfide + H2O = L-methionyl-(S)-S-oxide-[protein] + [thioredoxin]-dithiol. It catalyses the reaction [thioredoxin]-disulfide + L-methionine + H2O = L-methionine (S)-S-oxide + [thioredoxin]-dithiol. Its function is as follows. Has an important function as a repair enzyme for proteins that have been inactivated by oxidation. Catalyzes the reversible oxidation-reduction of methionine sulfoxide in proteins to methionine. The protein is Peptide methionine sulfoxide reductase MsrA of Xanthomonas oryzae pv. oryzae (strain PXO99A).